Here is a 150-residue protein sequence, read N- to C-terminus: Arginine repressor (150 aa).

This sequence belongs to the ArgR family.

The protein resides in the cytoplasm. The protein operates within amino-acid biosynthesis; L-arginine biosynthesis [regulation]. Functionally, regulates arginine biosynthesis genes. The protein is Arginine repressor of Staphylococcus carnosus (strain TM300).